The chain runs to 1280 residues: Multidrug resistance protein 1 (1280 aa).

The Cytoplasmic portion of the chain corresponds to 1–72 (MSRAHAAYAN…YADATDRVLM (72 aa)). One can recognise an ABC transmembrane type-1 1 domain in the interval 72 to 357 (MIAGTAFAVA…VAPSRTAFTE (286 aa)). The next 6 helical transmembrane spans lie at 73–93 (IAGT…SFIF), 120–140 (YVGI…TVAA), 189–209 (KLSQ…AGFV), 216–236 (LMMI…GSIV), 297–317 (LSAA…FFFG), and 326–345 (RDMA…SFGL). The Cytoplasmic segment spans residues 346-712 (GFVAPSRTAF…MRMNKDKAWA (367 aa)). One can recognise an ABC transporter 1 domain in the interval 391 to 634 (IEFRNVRFAY…DGEFAAVAKM (244 aa)). Residue 426-433 (GASGCGKS) participates in ATP binding. Helical transmembrane passes span 713–733 (VALG…SSIV), 762–781 (PLFI…HGFY), 837–857 (IGLK…GFIY), 858–878 (QWKL…CSLT), 938–958 (IIAG…YALC), and 976–996 (VMIA…AGAF). One can recognise an ABC transmembrane type-1 2 domain in the interval 713–1002 (VALGILSSVV…AGAFATKLAD (290 aa)). In terms of domain architecture, ABC transporter 2 spans 1036–1274 (IEYRNVQFIY…GGEYKTRYDL (239 aa)). 1071 to 1078 (GQTGCGKS) contributes to the ATP binding site. An N-linked (GlcNAc...) asparagine glycan is attached at Asn-1113.

This sequence belongs to the ABC transporter superfamily. ABCB family. Multidrug resistance exporter (TC 3.A.1.201) subfamily.

It is found in the membrane. The enzyme catalyses ATP + H2O + xenobioticSide 1 = ADP + phosphate + xenobioticSide 2.. Functionally, energy-dependent efflux pump responsible for decreased drug accumulation in multi-drug-resistant cells. Confers vinblastine resistance. The polypeptide is Multidrug resistance protein 1 (MDR1) (Leishmania enriettii).